The chain runs to 546 residues: CTP synthase (546 aa).

The interval 1 to 265 (MTKYVFVTGG…DEIVCHKLGI (265 aa)) is amidoligase domain. Serine 13 serves as a coordination point for CTP. Serine 13 lines the UTP pocket. ATP contacts are provided by residues 14–19 (SLGKGI) and aspartate 71. The Mg(2+) site is built by aspartate 71 and glutamate 139. CTP-binding positions include 146–148 (DIE), 186–191 (KTKPTQ), and lysine 222. Residues 186-191 (KTKPTQ) and lysine 222 contribute to the UTP site. Residues 290 to 543 (DIAFVGKYVD…VKAAIARHSA (254 aa)) enclose the Glutamine amidotransferase type-1 domain. Glycine 351 is a binding site for L-glutamine. Catalysis depends on cysteine 378, which acts as the Nucleophile; for glutamine hydrolysis. L-glutamine-binding positions include 379-382 (LGMQ), glutamate 402, and arginine 469. Active-site residues include histidine 516 and glutamate 518.

It belongs to the CTP synthase family. Homotetramer.

The enzyme catalyses UTP + L-glutamine + ATP + H2O = CTP + L-glutamate + ADP + phosphate + 2 H(+). It carries out the reaction L-glutamine + H2O = L-glutamate + NH4(+). The catalysed reaction is UTP + NH4(+) + ATP = CTP + ADP + phosphate + 2 H(+). Its pathway is pyrimidine metabolism; CTP biosynthesis via de novo pathway; CTP from UDP: step 2/2. Its activity is regulated as follows. Allosterically activated by GTP, when glutamine is the substrate; GTP has no effect on the reaction when ammonia is the substrate. The allosteric effector GTP functions by stabilizing the protein conformation that binds the tetrahedral intermediate(s) formed during glutamine hydrolysis. Inhibited by the product CTP, via allosteric rather than competitive inhibition. In terms of biological role, catalyzes the ATP-dependent amination of UTP to CTP with either L-glutamine or ammonia as the source of nitrogen. Regulates intracellular CTP levels through interactions with the four ribonucleotide triphosphates. This Azoarcus sp. (strain BH72) protein is CTP synthase.